The sequence spans 346 residues: N-acetyl-gamma-glutamyl-phosphate reductase (346 aa).

Residue Cys149 is part of the active site.

This sequence belongs to the NAGSA dehydrogenase family. Type 1 subfamily.

Its subcellular location is the cytoplasm. The enzyme catalyses N-acetyl-L-glutamate 5-semialdehyde + phosphate + NADP(+) = N-acetyl-L-glutamyl 5-phosphate + NADPH + H(+). The protein operates within amino-acid biosynthesis; L-arginine biosynthesis; N(2)-acetyl-L-ornithine from L-glutamate: step 3/4. Its function is as follows. Catalyzes the NADPH-dependent reduction of N-acetyl-5-glutamyl phosphate to yield N-acetyl-L-glutamate 5-semialdehyde. This Saccharophagus degradans (strain 2-40 / ATCC 43961 / DSM 17024) protein is N-acetyl-gamma-glutamyl-phosphate reductase.